A 288-amino-acid chain; its full sequence is Homoserine kinase (288 aa).

An ATP-binding site is contributed by 79–89 (PPARGLGSSSA).

Belongs to the GHMP kinase family. Homoserine kinase subfamily.

It is found in the cytoplasm. The catalysed reaction is L-homoserine + ATP = O-phospho-L-homoserine + ADP + H(+). Its pathway is amino-acid biosynthesis; L-threonine biosynthesis; L-threonine from L-aspartate: step 4/5. Catalyzes the ATP-dependent phosphorylation of L-homoserine to L-homoserine phosphate. This is Homoserine kinase from Listeria innocua serovar 6a (strain ATCC BAA-680 / CLIP 11262).